A 428-amino-acid polypeptide reads, in one-letter code: 3-phosphoshikimate 1-carboxyvinyltransferase (428 aa).

Positions 22, 23, and 27 each coordinate 3-phosphoshikimate. A phosphoenolpyruvate-binding site is contributed by lysine 22. 2 residues coordinate phosphoenolpyruvate: glycine 96 and arginine 124. Positions 170, 171, 172, 198, 314, 337, and 341 each coordinate 3-phosphoshikimate. Glutamine 172 contacts phosphoenolpyruvate. The active-site Proton acceptor is aspartate 314. The phosphoenolpyruvate site is built by arginine 345, arginine 387, and lysine 412.

The protein belongs to the EPSP synthase family. As to quaternary structure, monomer.

The protein localises to the cytoplasm. The catalysed reaction is 3-phosphoshikimate + phosphoenolpyruvate = 5-O-(1-carboxyvinyl)-3-phosphoshikimate + phosphate. Its pathway is metabolic intermediate biosynthesis; chorismate biosynthesis; chorismate from D-erythrose 4-phosphate and phosphoenolpyruvate: step 6/7. Functionally, catalyzes the transfer of the enolpyruvyl moiety of phosphoenolpyruvate (PEP) to the 5-hydroxyl of shikimate-3-phosphate (S3P) to produce enolpyruvyl shikimate-3-phosphate and inorganic phosphate. In Shewanella amazonensis (strain ATCC BAA-1098 / SB2B), this protein is 3-phosphoshikimate 1-carboxyvinyltransferase.